We begin with the raw amino-acid sequence, 497 residues long: Cytochrome P450 monooxygenase 151 (497 aa).

A helical transmembrane segment spans residues 1-21 (MTDLVPVYYAFAGVVAALLFY). N292 and N397 each carry an N-linked (GlcNAc...) asparagine glycan. C441 serves as a coordination point for heme.

It belongs to the cytochrome P450 family. Requires heme as cofactor.

The protein localises to the membrane. It functions in the pathway secondary metabolite biosynthesis. In terms of biological role, cytochrome P450 monooxygenase that is able to use dehydroabietic acid and testosterone as substrates for oxidation, suggesting that the natural substrate(s) may be structurally related to steroid compounds. The polypeptide is Cytochrome P450 monooxygenase 151 (Postia placenta (strain ATCC 44394 / Madison 698-R) (Brown rot fungus)).